Reading from the N-terminus, the 497-residue chain is Signal recognition particle subunit SRP54 2 (497 aa).

The tract at residues 1–297 is G-domain; sequence MVLAELGGRI…DAKPFVSRLL (297 aa). Residues 108–117, 192–196, and 250–253 contribute to the GTP site; these read GLQGEVLEKP, DTSGR, and TKMD. The interval 298 to 497 is M-domain; it reads GNGDMSGFVN…LMGMFGGRDE (200 aa).

The protein belongs to the GTP-binding SRP family. SRP54 subfamily. Component of a signal recognition particle (SRP) complex that consists of a 7SL RNA molecule of 300 nucleotides and six protein subunits: SRP72, SRP68, SRP54, SRP19, SRP14 and SRP9.

It is found in the cytoplasm. The protein resides in the endoplasmic reticulum. It catalyses the reaction GTP + H2O = GDP + phosphate + H(+). Functionally, component of the signal recognition particle (SRP) complex, a ribonucleoprotein complex that mediates the cotranslational targeting of secretory and membrane proteins to the endoplasmic reticulum (ER). As part of the SRP complex, associates with the SRP receptor (SR) component SRPRA to target secretory proteins to the endoplasmic reticulum membrane. Binds to the signal sequence of presecretory proteins when they emerge from the ribosomes. Displays basal GTPase activity, and stimulates reciprocal GTPase activation of the SR subunit SRPRA. Forms a guanosine 5'-triphosphate (GTP)-dependent complex with the SR subunit SRPRA. SR compaction and GTPase mediated rearrangement of SR drive SRP-mediated cotranslational protein translocation into the ER. Requires the presence of SRP9/SRP14 and/or SRP19 to stably interact with RNA. The chain is Signal recognition particle subunit SRP54 2 (SRP-54B) from Arabidopsis thaliana (Mouse-ear cress).